The chain runs to 367 residues: F-box protein At3g56470 (367 aa).

A compositionally biased stretch (basic residues) spans 1-18 (MVTRRRSKKKKKTKRKKQ). A disordered region spans residues 1–24 (MVTRRRSKKKKKTKRKKQSSKEKE). One can recognise an F-box domain in the interval 26–81 (YQTFINLPCDLLQLVISRLPLKDNIRASAVCKTWHEACVSLRVIHTSPWLIYFSKT).

The protein is F-box protein At3g56470 of Arabidopsis thaliana (Mouse-ear cress).